The primary structure comprises 882 residues: DNA polymerase 1 (882 aa).

Positions 1-31 (MTKQLTLFDIPSSKPAKSEQNTQQSQQSAPV) are disordered. Polar residues predominate over residues 18–29 (SEQNTQQSQQSA).

Belongs to the DNA polymerase type-B family. Interacts with PCNA subunit PCNA2 and weakly with PCNA3.

It catalyses the reaction DNA(n) + a 2'-deoxyribonucleoside 5'-triphosphate = DNA(n+1) + diphosphate. With respect to regulation, DNA synthesis is stimulated by PCNA heterotrimers. Functionally, this polymerase possesses two enzymatic activities: DNA synthesis (polymerase) and an exonucleolytic activity that degrades single-stranded DNA in the 3'- to 5'-direction. DNA polymerase I, DNA ligase and the flap endonuclease may be constitutively associated with the PCNA heterotrimer forming a scanning complex able to couple DNA synthesis and Okazaki fragment maturation. In Saccharolobus solfataricus (strain ATCC 35092 / DSM 1617 / JCM 11322 / P2) (Sulfolobus solfataricus), this protein is DNA polymerase 1 (dpo1).